The following is a 633-amino-acid chain: Extracellular metalloproteinase 3 (633 aa).

An N-terminal signal peptide occupies residues 1-18; it reads MHGLLLAGLLALPMNVLA. Residues 19–246 constitute a propeptide that is removed on maturation; that stretch reads YPAEQHASNV…VHNVVDYVAS (228 aa). N-linked (GlcNAc...) asparagine glycosylation occurs at N410. H429 contacts Zn(2+). E430 is an active-site residue. A Zn(2+)-binding site is contributed by H433. N480 and N622 each carry an N-linked (GlcNAc...) asparagine glycan.

The protein belongs to the peptidase M36 family. It depends on Zn(2+) as a cofactor.

It is found in the secreted. Its function is as follows. Secreted metalloproteinase probably acting as a virulence factor. The polypeptide is Extracellular metalloproteinase 3 (MEP3) (Trichophyton rubrum (Athlete's foot fungus)).